A 343-amino-acid polypeptide reads, in one-letter code: Arginine-hydroxylase NDUFAF5, mitochondrial (343 aa).

The transit peptide at 1 to 29 (MLRRVVLSRLYARLGGPAVSAGRGGRRGV) directs the protein to the mitochondrion. The segment at 18–40 (AVSAGRGGRRGVASSVPPSGSTS) is disordered.

Belongs to the methyltransferase superfamily. As to quaternary structure, interacts with NDUFAF8, leading to stabilize NDUFAF5. Interacts with NDUFS7. Interacts with PYURF (via TRM112 domain); the interaction is direct and stabilizes NDUFAF5 protein.

The protein resides in the mitochondrion inner membrane. Functionally, arginine hydroxylase that mediates hydroxylation of 'Arg-111' of NDUFS7 and is involved in the assembly of mitochondrial NADH:ubiquinone oxidoreductase complex (complex I, MT-ND1) at early stages. May also have methyltransferase activity. The chain is Arginine-hydroxylase NDUFAF5, mitochondrial from Rattus norvegicus (Rat).